A 118-amino-acid polypeptide reads, in one-letter code: Small ribosomal subunit protein uS13 (118 aa).

Positions 91 to 118 (HRRGLPVRGQRTKTNARTRKGPRKPIKK) are disordered.

The protein belongs to the universal ribosomal protein uS13 family. In terms of assembly, part of the 30S ribosomal subunit. Forms a loose heterodimer with protein S19. Forms two bridges to the 50S subunit in the 70S ribosome.

Its function is as follows. Located at the top of the head of the 30S subunit, it contacts several helices of the 16S rRNA. In the 70S ribosome it contacts the 23S rRNA (bridge B1a) and protein L5 of the 50S subunit (bridge B1b), connecting the 2 subunits; these bridges are implicated in subunit movement. Contacts the tRNAs in the A and P-sites. The protein is Small ribosomal subunit protein uS13 of Serratia proteamaculans (strain 568).